The primary structure comprises 346 residues: MPRGQKSTLHAREKRQQTRGQTQDHQGAQITATNKKKVSFSSPLILGATIQKKSAGRSRSALKKPQRALSTTTSVDVSYKKSYKGANSKIEKKQSFSQGLSSTVQSRTDPLIMKTNMLVQFLMEMYKMKKPIMKADMLKIVQKSHKNCFPEILKKASFNMEVVFGVDLKKVDSTKDSYVLVSKMDLPNNGTVTRGRGFPKTGLLLNLLGVIFMKGNCATEEKIWEFLNKMRIYDGKKHFIFGEPRKLITQDLVKLKYLEYRQVPNSNPARYEFLWGPRAHAETSKMKVLEFWAKVNKTVPSAFQFWYEEALRDEEERVQAAAMLNDGSSAMGRKCSKAKASSSSHA.

Residues 1–35 form a disordered region; that stretch reads MPRGQKSTLHAREKRQQTRGQTQDHQGAQITATNK. The span at 18–33 shows a compositional bias: polar residues; sequence TRGQTQDHQGAQITAT. The MAGE domain maps to 111-310; sequence LIMKTNMLVQ…SAFQFWYEEA (200 aa).

As to expression, expressed in testis.

This is Melanoma-associated antigen B3 (MAGEB3) from Homo sapiens (Human).